The sequence spans 1855 residues: Chitin synthase 5 (1855 aa).

One can recognise a Myosin motor domain in the interval 1-778; sequence MSSAPTTQQN…CWRQIVRAGD (778 aa). 95-102 contacts ATP; that stretch reads GESGTGKT. Residues N221, N520, and N558 are each glycosylated (N-linked (GlcNAc...) asparagine). The interval 585–650 is disordered; it reads AVQQASVASK…PKSADTQQGA (66 aa). The actin-binding stretch occupies residues 658–682; the sequence is LDNINKSLTAPNTNPYFFFCLKPND. A glycan (N-linked (GlcNAc...) asparagine) is linked at N662. Helical transmembrane passes span 887-907 and 922-942; these read WLVL…RIIG and VAIN…MVGF. The 59-residue stretch at 950-1008 folds into the Cytochrome b5 heme-binding domain; the sequence is QHVFSPSELTSYDGKNSDAYVAIRGNVFDLGAFIPQHYPSIVPASALEKYAGTDATNLF. N1037 and N1061 each carry an N-linked (GlcNAc...) asparagine glycan. A helical membrane pass occupies residues 1199–1219; sequence ILLAVSIMLVSVICFKFLAAL. 3 N-linked (GlcNAc...) asparagine glycosylation sites follow: N1422, N1456, and N1562. 3 helical membrane passes run 1587-1607, 1621-1641, and 1650-1670; these read FVVF…GYIV, ATTA…IFIV, and WMII…LIAF. N-linked (GlcNAc...) asparagine glycans are attached at residues N1755 and N1767. Residues 1797-1852 form the DEK-C domain; it reads MPNDDAILAEIREILATADLMTVTKKSIKAELERRFGVPMDSRRQYIGSATEAILS.

This sequence in the N-terminal section; belongs to the TRAFAC class myosin-kinesin ATPase superfamily. Myosin family. It in the C-terminal section; belongs to the chitin synthase family. Class V subfamily.

The protein localises to the apical cell membrane. Its subcellular location is the cell septum. It is found in the cell tip. The catalysed reaction is [(1-&gt;4)-N-acetyl-beta-D-glucosaminyl](n) + UDP-N-acetyl-alpha-D-glucosamine = [(1-&gt;4)-N-acetyl-beta-D-glucosaminyl](n+1) + UDP + H(+). Its function is as follows. Polymerizes chitin, a structural polymer of the cell wall and septum, by transferring the sugar moiety of UDP-GlcNAc to the non-reducing end of the growing chitin polymer. The protein is Chitin synthase 5 of Zymoseptoria tritici (strain CBS 115943 / IPO323) (Speckled leaf blotch fungus).